A 207-amino-acid polypeptide reads, in one-letter code: Outer-membrane lipoprotein LolB (207 aa).

The first 23 residues, 1-23 (MINLRRFTKFTLAGLTALSLLGG), serve as a signal peptide directing secretion. C24 is lipidated: N-palmitoyl cysteine. Residue C24 is the site of S-diacylglycerol cysteine attachment.

Belongs to the LolB family. As to quaternary structure, monomer.

It localises to the cell outer membrane. Functionally, plays a critical role in the incorporation of lipoproteins in the outer membrane after they are released by the LolA protein. This is Outer-membrane lipoprotein LolB from Shewanella amazonensis (strain ATCC BAA-1098 / SB2B).